The following is a 426-amino-acid chain: COMPASS component SWD1 (426 aa).

5 WD repeats span residues 24 to 63 (ENPL…PICV), 70 to 109 (AHVR…KPLK), 212 to 251 (ITSS…ENSA), 264 to 307 (INKL…LVRV), and 310 to 350 (GAEE…KWSA). Arginine 236 and lysine 266 together coordinate DNA.

Component of the Set1C/COMPASS complex which consists of SET1(2), BRE2(2), SPP1(2), SDC1(1), SHG1(1), SWD1(1), SWD2(1), and SWD3(1).

It is found in the nucleus. The protein resides in the chromosome. It localises to the telomere. In terms of biological role, component of the Set1C/COMPASS complex that specifically mono-, di- and trimethylates histone H3 to form H3K4me1/2/3, which subsequently plays a role in telomere length maintenance and transcription elongation regulation. COMPASS recognizes ubiquitinated H2B on one face of the nucleosome which stimulates the methylation of H3 on the opposing face. SWD1/CPS50 acts as an assembly and regulatory hub for COMPASS complex formation. Serves as a highly utilized surface for COMPASS interaction with the nucleosome. This chain is COMPASS component SWD1, found in Saccharomyces cerevisiae (strain ATCC 204508 / S288c) (Baker's yeast).